Consider the following 856-residue polypeptide: Envelope glycoprotein gp160 (856 aa).

The N-terminal stretch at 1-32 (MRVKEKYQHLRRWGWRWGTMLLGMLMICSATE) is a signal peptide. Topologically, residues 33–684 (KLWVTVYYGV…ITNWLWYIKI (652 aa)) are extracellular. Residues Cys54 and Cys74 are joined by a disulfide bond. N-linked (GlcNAc...) asparagine; by host glycans are attached at residues Asn88, Asn136, Asn141, Asn156, Asn160, Asn186, Asn197, Asn230, Asn234, Asn241, Asn262, Asn276, Asn289, Asn295, Asn301, Asn332, Asn339, and Asn356. Cystine bridges form between Cys119/Cys205, Cys126/Cys196, Cys131/Cys157, Cys218/Cys247, and Cys228/Cys239. A V1 region spans residues 131-156 (CTDLKNDTNTNSSSGGMIMEKGEIKN). Residues 157–196 (CSFNISTSIRGKVQKEYAFFYKHDIIPIDNDTTSYTLTSC) are V2. The tract at residues 296–330 (CTRPNNNTRKRIRIQRGPGRTFVTIGKIGNMRQAH) is V3. Cys296 and Cys331 are joined by a disulfide. The tract at residues 364 to 374 (SSGGDLEIVTH) is CD4-binding loop. Disulfide bonds link Cys378–Cys445 and Cys385–Cys418. Residues 385-418 (CNSTQLFNSTWFNSTWSTEGSNNTEGSDTITLPC) form a V4 region. N-linked (GlcNAc...) asparagine; by host glycans are attached at residues Asn386, Asn392, Asn397, Asn406, Asn448, and Asn463. V5 stretches follow at residues 461–471 (NNNGSEIFRPG) and 463–471 (NGSEIFRPG). Residues 512–532 (AVGIGALFLGFLGAAGSTMGA) form a fusion peptide region. An immunosuppression region spans residues 574–592 (KQLQARILAVERYLKDQQL). Cysteines 598 and 604 form a disulfide. 5 N-linked (GlcNAc...) asparagine; by host glycosylation sites follow: Asn611, Asn616, Asn624, Asn637, and Asn674. Residues 633-667 (REINNYTSLIHSLIEESQNQQEKNEQELLELDKWA) are a coiled coil. An MPER; binding to GalCer region spans residues 662–683 (ELDKWASLWNWFNITNWLWYIK). The helical transmembrane segment at 685–705 (FIMIVGGLVGLRIVFAVLSIV) threads the bilayer. Residues 706-856 (NRVRQGHSPL…IRQGLERILL (151 aa)) lie on the Cytoplasmic side of the membrane. Residues 715-742 (LSFQTHLPTPGGPDRPEGIEEEGGERDR) form a disordered region. 2 S-palmitoyl cysteine; by host lipidation sites follow: Cys764 and Cys837. The Di-leucine internalization motif signature appears at 855–856 (LL).

Belongs to the HIV-1 env protein family. The mature envelope protein (Env) consists of a homotrimer of non-covalently associated gp120-gp41 heterodimers. The resulting complex protrudes from the virus surface as a spike. There seems to be as few as 10 spikes on the average virion. Interacts with host CD4, CCR5 and CXCR4. Gp120 also interacts with the C-type lectins CD209/DC-SIGN and CLEC4M/DC-SIGNR (collectively referred to as DC-SIGN(R)). Gp120 and gp41 interact with GalCer. Gp120 interacts with host ITGA4/ITGB7 complex; on CD4+ T-cells, this interaction results in rapid activation of integrin ITGAL/LFA-1, which facilitates efficient cell-to-cell spreading of HIV-1. Gp120 interacts with cell-associated heparan sulfate; this interaction increases virus infectivity on permissive cells and may be involved in infection of CD4- cells. In terms of assembly, the mature envelope protein (Env) consists of a homotrimer of non-covalently associated gp120-gp41 heterodimers. The resulting complex protrudes from the virus surface as a spike. There seems to be as few as 10 spikes on the average virion. Highly glycosylated by host. The high number of glycan on the protein is reffered to as 'glycan shield' because it contributes to hide protein sequence from adaptive immune system. In terms of processing, palmitoylation of the transmembrane protein and of Env polyprotein (prior to its proteolytic cleavage) is essential for their association with host cell membrane lipid rafts. Palmitoylation is therefore required for envelope trafficking to classical lipid rafts, but not for viral replication. Post-translationally, specific enzymatic cleavages in vivo yield mature proteins. Envelope glycoproteins are synthesized as an inactive precursor that is heavily N-glycosylated and processed likely by host cell furin in the Golgi to yield the mature SU and TM proteins. The cleavage site between SU and TM requires the minimal sequence [KR]-X-[KR]-R. About 2 of the 9 disulfide bonds of gp41 are reduced by P4HB/PDI, following binding to CD4 receptor.

It localises to the virion membrane. The protein resides in the host cell membrane. The protein localises to the host endosome membrane. Oligomerizes in the host endoplasmic reticulum into predominantly trimers. In a second time, gp160 transits in the host Golgi, where glycosylation is completed. The precursor is then proteolytically cleaved in the trans-Golgi and thereby activated by cellular furin or furin-like proteases to produce gp120 and gp41. In terms of biological role, attaches the virus to the host lymphoid cell by binding to the primary receptor CD4. This interaction induces a structural rearrangement creating a high affinity binding site for a chemokine coreceptor like CXCR4 and/or CCR5. Acts as a ligand for CD209/DC-SIGN and CLEC4M/DC-SIGNR, which are respectively found on dendritic cells (DCs), and on endothelial cells of liver sinusoids and lymph node sinuses. These interactions allow capture of viral particles at mucosal surfaces by these cells and subsequent transmission to permissive cells. HIV subverts the migration properties of dendritic cells to gain access to CD4+ T-cells in lymph nodes. Virus transmission to permissive T-cells occurs either in trans (without DCs infection, through viral capture and transmission), or in cis (following DCs productive infection, through the usual CD4-gp120 interaction), thereby inducing a robust infection. In trans infection, bound virions remain infectious over days and it is proposed that they are not degraded, but protected in non-lysosomal acidic organelles within the DCs close to the cell membrane thus contributing to the viral infectious potential during DCs' migration from the periphery to the lymphoid tissues. On arrival at lymphoid tissues, intact virions recycle back to DCs' cell surface allowing virus transmission to CD4+ T-cells. Its function is as follows. Acts as a class I viral fusion protein. Under the current model, the protein has at least 3 conformational states: pre-fusion native state, pre-hairpin intermediate state, and post-fusion hairpin state. During fusion of viral and target intracellular membranes, the coiled coil regions (heptad repeats) assume a trimer-of-hairpins structure, positioning the fusion peptide in close proximity to the C-terminal region of the ectodomain. The formation of this structure appears to drive apposition and subsequent fusion of viral and target cell membranes. Complete fusion occurs in host cell endosomes and is dynamin-dependent, however some lipid transfer might occur at the plasma membrane. The virus undergoes clathrin-dependent internalization long before endosomal fusion, thus minimizing the surface exposure of conserved viral epitopes during fusion and reducing the efficacy of inhibitors targeting these epitopes. Membranes fusion leads to delivery of the nucleocapsid into the cytoplasm. This Homo sapiens (Human) protein is Envelope glycoprotein gp160.